The primary structure comprises 195 residues: Calcineurin B homologous protein 1 (195 aa).

Gly2 carries N-myristoyl glycine lipidation. 4 EF-hand domains span residues Ser26–Pro61, Ile66–Asp101, Ser110–Val145, and Gln151–Glu186. Ca(2+) contacts are provided by Asp123, Asp125, Asp127, Lys129, Glu134, Asp164, Asp166, Asp168, and Glu175.

The protein belongs to the calcineurin regulatory subunit family. CHP subfamily. As to quaternary structure, monomer. Phosphorylated. In terms of processing, calcium-binding or N-myristoylation are necessary for the Na(+)/H(+) exchange activities.

The protein resides in the nucleus. It is found in the cytoplasm. Its subcellular location is the cytoskeleton. It localises to the endomembrane system. The protein localises to the endoplasmic reticulum-Golgi intermediate compartment. The protein resides in the endoplasmic reticulum. It is found in the cell membrane. Its subcellular location is the membrane. Its function is as follows. Calcium-binding protein involved in different processes such as regulation of vesicular trafficking, plasma membrane Na(+)/H(+) exchanger and gene transcription. Involved in the constitutive exocytic membrane traffic. Mediates the association between microtubules and membrane-bound organelles of the endoplasmic reticulum and Golgi apparatus and is also required for the targeting and fusion of transcytotic vesicles (TCV) with the plasma membrane. Functions as an integral cofactor in cell pH regulation by controlling plasma membrane-type Na(+)/H(+) exchange activity. Inhibits serum- and GTPase-stimulated Na(+)/H(+) exchange. Plays a role as an inhibitor of ribosomal RNA transcription. Acts as a negative regulator of the calcineurin/NFAT signaling pathway. This Gallus gallus (Chicken) protein is Calcineurin B homologous protein 1 (CHP1).